The following is a 210-amino-acid chain: ATP-dependent Clp protease proteolytic subunit (210 aa).

Residue Ser-107 is the Nucleophile of the active site. Residue His-132 is part of the active site.

The protein belongs to the peptidase S14 family. As to quaternary structure, fourteen ClpP subunits assemble into 2 heptameric rings which stack back to back to give a disk-like structure with a central cavity, resembling the structure of eukaryotic proteasomes.

The protein localises to the cytoplasm. The catalysed reaction is Hydrolysis of proteins to small peptides in the presence of ATP and magnesium. alpha-casein is the usual test substrate. In the absence of ATP, only oligopeptides shorter than five residues are hydrolyzed (such as succinyl-Leu-Tyr-|-NHMec, and Leu-Tyr-Leu-|-Tyr-Trp, in which cleavage of the -Tyr-|-Leu- and -Tyr-|-Trp bonds also occurs).. Functionally, cleaves peptides in various proteins in a process that requires ATP hydrolysis. Has a chymotrypsin-like activity. Plays a major role in the degradation of misfolded proteins. The protein is ATP-dependent Clp protease proteolytic subunit of Zymomonas mobilis subsp. mobilis (strain ATCC 31821 / ZM4 / CP4).